A 425-amino-acid polypeptide reads, in one-letter code: Glutamyl-tRNA reductase (425 aa).

Substrate contacts are provided by residues 49–52 (TCNR), Ser-109, 114–116 (EGQ), and Gln-120. Cys-50 serves as the catalytic Nucleophile. 189 to 194 (GAGETG) is an NADP(+) binding site.

The protein belongs to the glutamyl-tRNA reductase family. In terms of assembly, homodimer.

It catalyses the reaction (S)-4-amino-5-oxopentanoate + tRNA(Glu) + NADP(+) = L-glutamyl-tRNA(Glu) + NADPH + H(+). The protein operates within porphyrin-containing compound metabolism; protoporphyrin-IX biosynthesis; 5-aminolevulinate from L-glutamyl-tRNA(Glu): step 1/2. It participates in porphyrin-containing compound metabolism; chlorophyll biosynthesis. Functionally, catalyzes the NADPH-dependent reduction of glutamyl-tRNA(Glu) to glutamate 1-semialdehyde (GSA). The polypeptide is Glutamyl-tRNA reductase (Chlorobium phaeobacteroides (strain DSM 266 / SMG 266 / 2430)).